Here is a 76-residue protein sequence, read N- to C-terminus: Exodeoxyribonuclease 7 small subunit (76 aa).

It belongs to the XseB family. Heterooligomer composed of large and small subunits.

It localises to the cytoplasm. It catalyses the reaction Exonucleolytic cleavage in either 5'- to 3'- or 3'- to 5'-direction to yield nucleoside 5'-phosphates.. Functionally, bidirectionally degrades single-stranded DNA into large acid-insoluble oligonucleotides, which are then degraded further into small acid-soluble oligonucleotides. The protein is Exodeoxyribonuclease 7 small subunit of Staphylococcus haemolyticus (strain JCSC1435).